Reading from the N-terminus, the 116-residue chain is Proline-rich protein 9 (116 aa).

This is Proline-rich protein 9 (PRR9) from Homo sapiens (Human).